A 260-amino-acid chain; its full sequence is Snake venom serine protease homolog KN7 (260 aa).

The first 18 residues, 1-18, serve as a signal peptide directing secretion; sequence MVLIRVLANLLILQLSYA. Residues 19 to 24 constitute a propeptide that is removed on maturation; the sequence is QKSSEL. In terms of domain architecture, Peptidase S1 spans 25–251; sequence IIGGDECNIN…HLDWIKSIIA (227 aa). 6 disulfide bridges follow: cysteine 31/cysteine 165, cysteine 52/cysteine 68, cysteine 100/cysteine 258, cysteine 144/cysteine 212, cysteine 176/cysteine 191, and cysteine 202/cysteine 227. Asparagine 83, asparagine 123, and asparagine 124 each carry an N-linked (GlcNAc...) asparagine glycan.

It belongs to the peptidase S1 family. Snake venom subfamily. In terms of tissue distribution, expressed by the venom gland.

The protein resides in the secreted. Functionally, snake venom serine protease homolog that may act in the hemostasis system of the prey. The chain is Snake venom serine protease homolog KN7 from Trimeresurus stejnegeri (Chinese green tree viper).